We begin with the raw amino-acid sequence, 110 residues long: uncharacterized protein (110 aa).

The protein belongs to the RuBisCO large chain family.

It is found in the mitochondrion. This is an uncharacterized protein from Arabidopsis thaliana (Mouse-ear cress).